A 303-amino-acid polypeptide reads, in one-letter code: MSEPQPDLEPPQHGLYMLFLLVLVFFLMGLVGFMICHVLKKKGYRCRTSRGSEPDDAQLQPPEDDDMNEDTVERIVRCIIQNEANAEALKEMLGDSEGEGTVQLSSVDATSSLQDGAPSHHHTVHLGSAAPCLHCSRSKRPPLVRQGRSKEGKSRPRTGETTVFSVGRFRVTHIEKRYGLHEHRDGSPTDRSWGSGGGQDPGGGQGSGGGQPKAGMPAMERLPPERPQPQVLASPPVQNGGLRDSSLTPRALEGNPRASAEPTLRAGGRGPSPGLPTQEANGQPSKPDTSDHQVSLPQGAGSM.

Residues 15–35 (LYMLFLLVLVFFLMGLVGFMI) traverse the membrane as a helical segment. Disordered stretches follow at residues 46–67 (CRTSRGSEPDDAQLQPPEDDDM) and 132–303 (CLHC…AGSM). At Ser-52 the chain carries Phosphoserine. Basic and acidic residues-rich tracts occupy residues 148–158 (RSKEGKSRPRT) and 172–188 (THIEKRYGLHEHRDGSP). Gly residues predominate over residues 194-212 (GSGGGQDPGGGQGSGGGQP). Over residues 278 to 296 (QEANGQPSKPDTSDHQVSL) the composition is skewed to polar residues.

This sequence belongs to the RELT family. Interacts with RELT, RELL1 and OXSR1. Interacts with PLSCR1. Interacts with TRAF2. Phosphorylated in vitro by OXSR1. Primarily expressed in spleen, thymus, testis, peripheral blood leukocytes, brain and placenta. Not detected in prostate, ovary, small intestine, colon, heart, lung, liver, skeletal muscle, kidney and pancreas.

The protein resides in the cell membrane. In terms of biological role, induces activation of MAPK14/p38 cascade, when overexpressed. Induces apoptosis, when overexpressed. This Homo sapiens (Human) protein is RELT-like protein 2 (RELL2).